A 447-amino-acid chain; its full sequence is Na(+)-translocating NADH-quinone reductase subunit A (447 aa).

This sequence belongs to the NqrA family. In terms of assembly, composed of six subunits; NqrA, NqrB, NqrC, NqrD, NqrE and NqrF.

The enzyme catalyses a ubiquinone + n Na(+)(in) + NADH + H(+) = a ubiquinol + n Na(+)(out) + NAD(+). In terms of biological role, NQR complex catalyzes the reduction of ubiquinone-1 to ubiquinol by two successive reactions, coupled with the transport of Na(+) ions from the cytoplasm to the periplasm. NqrA to NqrE are probably involved in the second step, the conversion of ubisemiquinone to ubiquinol. This is Na(+)-translocating NADH-quinone reductase subunit A from Yersinia pestis bv. Antiqua (strain Angola).